Reading from the N-terminus, the 305-residue chain is Recombination-associated protein RdgC (305 aa).

Belongs to the RdgC family.

The protein resides in the cytoplasm. Its subcellular location is the nucleoid. In terms of biological role, may be involved in recombination. The protein is Recombination-associated protein RdgC of Sodalis glossinidius (strain morsitans).